We begin with the raw amino-acid sequence, 660 residues long: Translation factor GUF1 homolog, mitochondrial (660 aa).

The tr-type G domain occupies 62-243 (EKIRNFSIIA…TIIEKIPPPT (182 aa)). GTP is bound by residues 71 to 78 (AHIDHGKS), 136 to 140 (DTPGH), and 190 to 193 (NKID).

Belongs to the TRAFAC class translation factor GTPase superfamily. Classic translation factor GTPase family. LepA subfamily.

It localises to the mitochondrion inner membrane. It catalyses the reaction GTP + H2O = GDP + phosphate + H(+). In terms of biological role, promotes mitochondrial protein synthesis. May act as a fidelity factor of the translation reaction, by catalyzing a one-codon backward translocation of tRNAs on improperly translocated ribosomes. Binds to mitochondrial ribosomes in a GTP-dependent manner. This Trichoplax adhaerens (Trichoplax reptans) protein is Translation factor GUF1 homolog, mitochondrial.